The primary structure comprises 132 residues: Small ribosomal subunit protein uS8 (132 aa).

It belongs to the universal ribosomal protein uS8 family. As to quaternary structure, part of the 30S ribosomal subunit. Contacts proteins S5 and S12.

In terms of biological role, one of the primary rRNA binding proteins, it binds directly to 16S rRNA central domain where it helps coordinate assembly of the platform of the 30S subunit. This is Small ribosomal subunit protein uS8 from Rhodopseudomonas palustris (strain BisB18).